Consider the following 513-residue polypeptide: ATP synthase subunit alpha (513 aa).

Position 169-176 (169-176 (GDRQTGKT)) interacts with ATP.

Belongs to the ATPase alpha/beta chains family. As to quaternary structure, F-type ATPases have 2 components, CF(1) - the catalytic core - and CF(0) - the membrane proton channel. CF(1) has five subunits: alpha(3), beta(3), gamma(1), delta(1), epsilon(1). CF(0) has three main subunits: a(1), b(2) and c(9-12). The alpha and beta chains form an alternating ring which encloses part of the gamma chain. CF(1) is attached to CF(0) by a central stalk formed by the gamma and epsilon chains, while a peripheral stalk is formed by the delta and b chains.

It localises to the cell inner membrane. The enzyme catalyses ATP + H2O + 4 H(+)(in) = ADP + phosphate + 5 H(+)(out). Functionally, produces ATP from ADP in the presence of a proton gradient across the membrane. The alpha chain is a regulatory subunit. This Ruegeria sp. (strain TM1040) (Silicibacter sp.) protein is ATP synthase subunit alpha.